We begin with the raw amino-acid sequence, 124 residues long: Fluoride-specific ion channel FluC 2 (124 aa).

4 consecutive transmembrane segments (helical) span residues 1-21, 34-54, 66-86, and 103-123; these read MSDI…RFQI, FLIL…LSLV, LILF…SFVY, and LFII…FLGT. 2 residues coordinate Na(+): G76 and S79.

This sequence belongs to the fluoride channel Fluc/FEX (TC 1.A.43) family.

Its subcellular location is the cell inner membrane. The enzyme catalyses fluoride(in) = fluoride(out). Its activity is regulated as follows. Na(+) is not transported, but it plays an essential structural role and its presence is essential for fluoride channel function. Its function is as follows. Fluoride-specific ion channel. Important for reducing fluoride concentration in the cell, thus reducing its toxicity. In Prochlorococcus marinus (strain NATL2A), this protein is Fluoride-specific ion channel FluC 2.